Consider the following 502-residue polypeptide: ATP synthase subunit alpha (502 aa).

A disordered region spans residues 115-135 (VDGLGPINTTNTRPIESPAPG). 169-176 (GDRQTGKT) serves as a coordination point for ATP.

The protein belongs to the ATPase alpha/beta chains family. F-type ATPases have 2 components, CF(1) - the catalytic core - and CF(0) - the membrane proton channel. CF(1) has five subunits: alpha(3), beta(3), gamma(1), delta(1), epsilon(1). CF(0) has three main subunits: a(1), b(2) and c(9-12). The alpha and beta chains form an alternating ring which encloses part of the gamma chain. CF(1) is attached to CF(0) by a central stalk formed by the gamma and epsilon chains, while a peripheral stalk is formed by the delta and b chains.

Its subcellular location is the cell membrane. It catalyses the reaction ATP + H2O + 4 H(+)(in) = ADP + phosphate + 5 H(+)(out). Produces ATP from ADP in the presence of a proton gradient across the membrane. The alpha chain is a regulatory subunit. In Bacillus anthracis (strain A0248), this protein is ATP synthase subunit alpha.